Here is a 211-residue protein sequence, read N- to C-terminus: Glutathione S-transferase class-mu 28 kDa isozyme (211 aa).

A GST N-terminal domain is found at 4–86; that stretch reads DHIKVIYFNG…YMAKKHHMMG (83 aa). Positions 10, 16, 41, 45, 53, 70, 71, and 104 each coordinate glutathione. The 124-residue stretch at 88-211 folds into the GST C-terminal domain; that stretch reads TEEEYYNVEK…YLSDRAATPF (124 aa).

This sequence belongs to the GST superfamily. Mu family. Homodimer.

The enzyme catalyses RX + glutathione = an S-substituted glutathione + a halide anion + H(+). Its function is as follows. Conjugation of reduced glutathione to a wide number of exogenous and endogenous hydrophobic electrophiles. Functionally, GST isoenzymes appear to play a central role in the parasite detoxification system. Other functions are also suspected including a role in increasing the solubility of haematin in the parasite gut. This chain is Glutathione S-transferase class-mu 28 kDa isozyme, found in Schistosoma haematobium (Blood fluke).